The sequence spans 289 residues: ATP synthase gamma chain (289 aa).

The protein belongs to the ATPase gamma chain family. In terms of assembly, F-type ATPases have 2 components, CF(1) - the catalytic core - and CF(0) - the membrane proton channel. CF(1) has five subunits: alpha(3), beta(3), gamma(1), delta(1), epsilon(1). CF(0) has three main subunits: a, b and c.

It localises to the cell inner membrane. Its function is as follows. Produces ATP from ADP in the presence of a proton gradient across the membrane. The gamma chain is believed to be important in regulating ATPase activity and the flow of protons through the CF(0) complex. This is ATP synthase gamma chain from Herminiimonas arsenicoxydans.